The primary structure comprises 356 residues: L-Ala-D/L-Glu epimerase (356 aa).

161–163 (KVK) lines the substrate pocket. Aspartate 191, glutamate 219, and aspartate 244 together coordinate Mg(2+). Substrate contacts are provided by residues lysine 268 and 320-322 (DLD).

This sequence belongs to the mandelate racemase/muconate lactonizing enzyme family. The cofactor is Mg(2+).

The catalysed reaction is L-alanyl-L-glutamate = L-alanyl-D-glutamate. Dipeptide epimerase with a preference for substrates containing a Glu residue in the second position. Catalyzes the epimerization of L-Ala-L-Glu, L-Ser-L-Glu, L-Thr-L-Glu, L-Val-L-Glu, L-Gly-L-Glu and L-Thr-L-Glu (in vitro). May play a role in the metabolism of the murein peptide, of which L-Ala-D-Glu is a component. The polypeptide is L-Ala-D/L-Glu epimerase (Francisella tularensis subsp. novicida (strain U112)).